The following is a 171-amino-acid chain: Large ribosomal subunit protein bL9 (171 aa).

Belongs to the bacterial ribosomal protein bL9 family.

Functionally, binds to the 23S rRNA. In Rickettsia canadensis (strain McKiel), this protein is Large ribosomal subunit protein bL9.